We begin with the raw amino-acid sequence, 300 residues long: uncharacterized protein (300 aa).

A divalent metal cation-binding residues include Glu-146, Glu-148, and Asp-177.

This sequence belongs to the FAH family.

This is an uncharacterized protein from Staphylococcus aureus (strain MW2).